We begin with the raw amino-acid sequence, 48 residues long: Large ribosomal subunit protein bL34 (48 aa).

Belongs to the bacterial ribosomal protein bL34 family.

The chain is Large ribosomal subunit protein bL34 from Gloeothece citriformis (strain PCC 7424) (Cyanothece sp. (strain PCC 7424)).